The primary structure comprises 1488 residues: Chromosome partition protein MukB (1488 aa).

34 to 41 lines the ATP pocket; the sequence is GGNGAGKS. Coiled-coil stretches lie at residues 326 to 418, 444 to 472, and 509 to 602; these read LEAD…QYNQ, LDTF…QTAH, and RHLA…QRAP. Residues 666–783 form a flexible hinge region; it reads PGGAEDQRLN…SLPIFGRAAR (118 aa). 3 coiled-coil regions span residues 835–923, 977–1116, and 1209–1265; these read EAEI…AKLE, EMLS…AKAG, and VEAI…LQSV. The tract at residues 1049–1074 is disordered; that stretch reads ADSGAEERARQRRDELHAQLSNNRSR. A compositionally biased stretch (basic and acidic residues) spans 1051–1065; that stretch reads SGAEERARQRRDELH.

Belongs to the SMC family. MukB subfamily. In terms of assembly, homodimerization via its hinge domain. Binds to DNA via its C-terminal region. Interacts, and probably forms a ternary complex, with MukE and MukF via its C-terminal region. The complex formation is stimulated by calcium or magnesium. Interacts with tubulin-related protein FtsZ.

It localises to the cytoplasm. It is found in the nucleoid. Its function is as follows. Plays a central role in chromosome condensation, segregation and cell cycle progression. Functions as a homodimer, which is essential for chromosome partition. Involved in negative DNA supercoiling in vivo, and by this means organize and compact chromosomes. May achieve or facilitate chromosome segregation by condensation DNA from both sides of a centrally located replisome during cell division. The protein is Chromosome partition protein MukB of Salmonella schwarzengrund (strain CVM19633).